Consider the following 166-residue polypeptide: Cold-inducible RNA-binding protein (166 aa).

Residues 6–84 enclose the RRM domain; sequence GKLFVGGLNF…RQIRVDQAGK (79 aa). Residues 68 to 166 are disordered; that stretch reads NGKSVDGRQI…DSYDSYTTQE (99 aa). The segment covering 93–120 has biased composition (gly residues); sequence YRGGSSGGRGFFRGGRGRGGGGDRGYGG. A compositionally biased stretch (low complexity) spans 121–166; it reads SSRFENRSGGYQSSGSRDYYGRSHGSYGDRSGGSYRDSYDSYTTQE.

In terms of assembly, interacts with prmt1. Interacts with elavl1/elrA (via RRM3). Associates with ribosomes. In terms of processing, methylated on arginine residues within RGG motifs. Methylation by prmt1 promotes cytoplasmic accumulation.

The protein resides in the nucleus. The protein localises to the nucleoplasm. It is found in the cytoplasm. Its function is as follows. Cold-inducible mRNA binding protein. Acts cooperatively with elavl1/elrA to stabilize AU-rich element (ARE)-containing mRNAs by binding to themm and inhibiting their deadenylation. Essential for embryonic gastrulation and neural development, acting to maintain the expression of a set of adhesion molecules, and cell movement during embryogenesis. Required for pronephros development. This is Cold-inducible RNA-binding protein from Xenopus tropicalis (Western clawed frog).